The chain runs to 482 residues: Methylenetetrahydrofolate--tRNA-(uracil-5-)-methyltransferase TrmFO (482 aa).

20 to 25 (GGGLAG) contacts FAD.

It belongs to the MnmG family. TrmFO subfamily. FAD is required as a cofactor.

It is found in the cytoplasm. The catalysed reaction is uridine(54) in tRNA + (6R)-5,10-methylene-5,6,7,8-tetrahydrofolate + NADH + H(+) = 5-methyluridine(54) in tRNA + (6S)-5,6,7,8-tetrahydrofolate + NAD(+). It carries out the reaction uridine(54) in tRNA + (6R)-5,10-methylene-5,6,7,8-tetrahydrofolate + NADPH + H(+) = 5-methyluridine(54) in tRNA + (6S)-5,6,7,8-tetrahydrofolate + NADP(+). Functionally, catalyzes the folate-dependent formation of 5-methyl-uridine at position 54 (M-5-U54) in all tRNAs. The chain is Methylenetetrahydrofolate--tRNA-(uracil-5-)-methyltransferase TrmFO from Rhodopseudomonas palustris (strain HaA2).